We begin with the raw amino-acid sequence, 327 residues long: Probable cell division protein WhiA (327 aa).

Positions 275 to 308 (SLEELGRLADPPMTKDAVAGRIRRLLSMADRKAK) form a DNA-binding region, H-T-H motif.

The protein belongs to the WhiA family.

Its function is as follows. Involved in cell division and chromosome segregation. The sequence is that of Probable cell division protein WhiA from Mycobacterium bovis (strain ATCC BAA-935 / AF2122/97).